A 504-amino-acid chain; its full sequence is Maturase K (504 aa).

It belongs to the intron maturase 2 family. MatK subfamily.

It is found in the plastid. Its subcellular location is the chloroplast. Functionally, usually encoded in the trnK tRNA gene intron. Probably assists in splicing its own and other chloroplast group II introns. This chain is Maturase K, found in Quercus coccifera (Kermes oak).